A 262-amino-acid polypeptide reads, in one-letter code: Ninja-family protein 2 (262 aa).

The disordered stretch occupies residues 49 to 70; that stretch reads RNSLACNTSKEAAGQSPKEMNA.

This sequence belongs to the Ninja family.

It localises to the nucleus. This Zea mays (Maize) protein is Ninja-family protein 2.